A 319-amino-acid polypeptide reads, in one-letter code: Aliphatic sulfonates import ATP-binding protein SsuB 1 (319 aa).

The ABC transporter domain occupies Val-63–Leu-282. Gly-95–Ser-102 is a binding site for ATP.

The protein belongs to the ABC transporter superfamily. Aliphatic sulfonates importer (TC 3.A.1.17.2) family. In terms of assembly, the complex is composed of two ATP-binding proteins (SsuB), two transmembrane proteins (SsuC) and a solute-binding protein (SsuA).

The protein localises to the cell inner membrane. The enzyme catalyses ATP + H2O + aliphatic sulfonate-[sulfonate-binding protein]Side 1 = ADP + phosphate + aliphatic sulfonateSide 2 + [sulfonate-binding protein]Side 1.. In terms of biological role, part of the ABC transporter complex SsuABC involved in aliphatic sulfonates import. Responsible for energy coupling to the transport system. The sequence is that of Aliphatic sulfonates import ATP-binding protein SsuB 1 from Burkholderia cenocepacia (strain HI2424).